The chain runs to 993 residues: UPF0182 protein ROP_64500 (993 aa).

7 helical membrane passes run 18–38 (VLLV…RLIS), 63–83 (LLLF…ALLL), 114–134 (LFGL…AQSS), 174–194 (WLFV…YIFG), 211–231 (VQLA…YWFD), 260–280 (KLIL…AIFL), and 288–308 (MATA…PLVV). Positions 904–948 (TGSVATAPSAEEGTPPETGTTPPVEQGAAPPAPTAPATPPSGTDV) are disordered. Residues 908 to 926 (ATAPSAEEGTPPETGTTPP) show a composition bias toward low complexity. A compositionally biased stretch (pro residues) spans 933 to 942 (PPAPTAPATP).

The protein belongs to the UPF0182 family.

It localises to the cell membrane. This chain is UPF0182 protein ROP_64500, found in Rhodococcus opacus (strain B4).